A 255-amino-acid polypeptide reads, in one-letter code: Probable transcriptional regulatory protein PCC7424_2775 (255 aa).

This sequence belongs to the TACO1 family.

Its subcellular location is the cytoplasm. The chain is Probable transcriptional regulatory protein PCC7424_2775 from Gloeothece citriformis (strain PCC 7424) (Cyanothece sp. (strain PCC 7424)).